A 216-amino-acid polypeptide reads, in one-letter code: ADP-sugar pyrophosphatase (216 aa).

N-acetylmethionine is present on Met-1. Phosphoserine occurs at positions 3 and 10. Trp-28 serves as a coordination point for substrate. Lys-42 participates in a covalent cross-link: Glycyl lysine isopeptide (Lys-Gly) (interchain with G-Cter in SUMO2). Thr-45 is subject to Phosphothreonine. Substrate is bound by residues 46–47 and Arg-51; that span reads WE. Residues 57–194 enclose the Nudix hydrolase domain; the sequence is QTADGVAVIP…EEHLTVDARV (138 aa). The residue at position 74 (Tyr-74) is a Phosphotyrosine. Arg-84 is a substrate binding site. A Mg(2+)-binding site is contributed by Ala-96. The short motif at 97–118 is the Nudix box element; sequence GLIDDGETPEAAALRELEEETG. Leu-98 lines the substrate pocket. Mg(2+) is bound by residues Glu-112 and Glu-116. Residue Asp-133 participates in substrate binding. Position 163 (Glu-163) interacts with Mg(2+). N6-acetyllysine is present on residues Lys-207 and Lys-215.

The protein belongs to the Nudix hydrolase family. In terms of assembly, homodimer. Interacts with PARG. It depends on Mg(2+) as a cofactor. Post-translationally, phosphorylation at Thr-45 is required for homodimer stability; dephosphorylation results in destabilization of the homodimer. Dephosphorylation at Thr-45 promotes the ATP-synthesis activity.

The protein resides in the nucleus. It catalyses the reaction D-ribose 5-phosphate + ATP + H(+) = ADP-D-ribose + diphosphate. It carries out the reaction ADP-D-ribose + H2O = D-ribose 5-phosphate + AMP + 2 H(+). The enzyme catalyses 8-oxo-dGDP + H2O = 8-oxo-dGMP + phosphate + H(+). Its function is as follows. Enzyme that can either act as an ADP-sugar pyrophosphatase in absence of diphosphate or catalyze the synthesis of ATP in presence of diphosphate. In absence of diphosphate, hydrolyzes with similar activities various modified nucleoside diphosphates such as ADP-ribose, ADP-mannose, ADP-glucose, 8-oxo-GDP and 8-oxo-dGDP. Can also hydrolyze other nucleotide sugars with low activity. In presence of diphosphate, mediates the synthesis of ATP in the nucleus by catalyzing the conversion of ADP-ribose to ATP and ribose 5-phosphate. Nuclear ATP synthesis takes place when dephosphorylated at Thr-45. Nuclear ATP generation is required for extensive chromatin remodeling events that are energy-consuming. Does not play a role in U8 snoRNA decapping activity. Binds U8 snoRNA. The chain is ADP-sugar pyrophosphatase from Pongo abelii (Sumatran orangutan).